Consider the following 567-residue polypeptide: Glutathione/L-cysteine transport system ATP-binding/permease protein CydC (567 aa).

Transmembrane regions (helical) follow at residues 14 to 34, 44 to 64, 130 to 150, 156 to 176, 240 to 260, and 266 to 286; these read ILTL…MQAE, FNGK…IAFI, FLPK…YVFF, AIIL…LGLV, SFAL…FLGL, and DILL…FLPV. In terms of domain architecture, ABC transmembrane type-1 spans 17-298; that stretch reads LITCLTLIQT…VGNDYHATLN (282 aa). The ABC transporter domain occupies 321-561; the sequence is LQLEAWSDQD…NGVYTKLVKA (241 aa). 360 to 367 contributes to the ATP binding site; the sequence is GASGAGKS.

It belongs to the ABC transporter superfamily. Cysteine exporter (TC 3.A.1.129.1) family. As to quaternary structure, forms a heterodimer with CydD.

It is found in the cell membrane. The enzyme catalyses L-cysteine(in) + ATP + H2O = L-cysteine(out) + ADP + phosphate + H(+). It carries out the reaction glutathione(in) + ATP + H2O = glutathione(out) + ADP + phosphate + H(+). Its function is as follows. Part of the ABC transporter complex CydDC that exports the reduced low-molecular-weight thiols cysteine and glutathione from the cell. Export of these thiol-containing redox-active molecules may be crucial for redox homeostasis, permitting correct assembly of various respiratory complexes and formation of correct disulfide bonds in secreted proteins. CydC contains transmembrane domains (TMD), which form a pore in the membrane, and an ATP-binding domain (NBD), which is responsible for energy generation. The polypeptide is Glutathione/L-cysteine transport system ATP-binding/permease protein CydC (cydC) (Bacillus subtilis (strain 168)).